Consider the following 243-residue polypeptide: Phosphoribosylaminoimidazole-succinocarboxamide synthase (243 aa).

This sequence belongs to the SAICAR synthetase family.

The catalysed reaction is 5-amino-1-(5-phospho-D-ribosyl)imidazole-4-carboxylate + L-aspartate + ATP = (2S)-2-[5-amino-1-(5-phospho-beta-D-ribosyl)imidazole-4-carboxamido]succinate + ADP + phosphate + 2 H(+). Its pathway is purine metabolism; IMP biosynthesis via de novo pathway; 5-amino-1-(5-phospho-D-ribosyl)imidazole-4-carboxamide from 5-amino-1-(5-phospho-D-ribosyl)imidazole-4-carboxylate: step 1/2. This is Phosphoribosylaminoimidazole-succinocarboxamide synthase from Lactiplantibacillus plantarum (strain ATCC BAA-793 / NCIMB 8826 / WCFS1) (Lactobacillus plantarum).